We begin with the raw amino-acid sequence, 481 residues long: Mechanosensory protein 2 (481 aa).

Positions 1–22 (MSATMSSARNSVVSLSSNGSVK) are enriched in low complexity. Disordered stretches follow at residues 1–67 (MSAT…MATR) and 80–104 (SANS…GNGK). Positions 27 to 38 (LVSNERSSSIQQ) are enriched in polar residues. Basic and acidic residues predominate over residues 86–104 (DSVKKEKQAEKDVEKGNGK). The helical transmembrane segment at 115–135 (GVCGWILTILSYLLIFFTLPI) threads the bilayer. Residues 403 to 421 (EGGGGHGHSHGGGGGGLGS) show a composition bias toward gly residues. The disordered stretch occupies residues 403-481 (EGGGGHGHSH…SQLDPALLIR (79 aa)). A compositionally biased stretch (low complexity) spans 433–447 (SGPSTTTTSGRPLLR). Residues 463-473 (APNQSQTSVSQ) show a composition bias toward polar residues.

The protein belongs to the band 7/mec-2 family. Component of a non-voltage-gated amiloride-sensitive cation channel complex (also called the degenerin channel complex) composed of at least the mec-2, mec-4, mec-6 and mec-10 subunits; the complex mediates mechanotransduction in touch cells. Interacts with mec-6 and mec-4.

It localises to the membrane. Functionally, subunit of an amiloride-sensitive cation channel (degenerin channel complex) permeable for sodium, potassium, lithium and N-methylglucamine, and required for mechanosensory transduction (touch sensitivity). Positively regulates the activity of the putative mechanosensory transduction channel. May link the mechanosensory channel and the microtubule cytoskeleton of the touch receptor neurons. Required for the function of a set of six touch receptor neurons. This chain is Mechanosensory protein 2, found in Caenorhabditis elegans.